A 411-amino-acid polypeptide reads, in one-letter code: Isocitrate dehydrogenase [NADP] peroxisomal (411 aa).

Residues 78–80 (TIT) and R85 each bind NADP(+). A substrate-binding site is contributed by T80. Residues 97–103 (SPNGTLR), R112, and R135 contribute to the substrate site. Position 254 (D254) interacts with Mn(2+). Residue K262 participates in NADP(+) binding. D277 contributes to the Mn(2+) binding site. Residues 312 to 317 (GTVTRH) and N330 each bind NADP(+).

The protein belongs to the isocitrate and isopropylmalate dehydrogenases family. Requires Mg(2+) as cofactor. The cofactor is Mn(2+).

The protein resides in the peroxisome. It catalyses the reaction D-threo-isocitrate + NADP(+) = 2-oxoglutarate + CO2 + NADPH. May play a role in N-alkane metabolism, glutamate synthesis, and/or NADPH generation in the peroxisomes. This chain is Isocitrate dehydrogenase [NADP] peroxisomal (IDP2), found in Candida tropicalis (Yeast).